The primary structure comprises 1639 residues: RIMS-binding protein 3A (1639 aa).

3 disordered regions span residues 1–22 (MAKD…SSPA), 215–240 (GSPD…CHAP), and 295–364 (SLDS…LTPS). Residues 21–143 (PAAAVLENQR…ELQRQLAEEL (123 aa)) are a coiled coil. Pro residues predominate over residues 326 to 339 (SPPPSPLPPPPPPS). Coiled-coil stretches lie at residues 409–442 (QADE…QETN) and 480–619 (LAKD…AEEN). Residues 697–811 (CRPGHPPEQP…DRDTASEVDD (115 aa)) are disordered. 2 stretches are compositionally biased toward polar residues: residues 707–718 (WETSQMPESQVK) and 761–775 (SVPQ…SQPL). The segment covering 776–790 (SKKTSSQSNSSSEGS) has biased composition (low complexity). Positions 832–899 (PKLKIFMAQY…PSNFVEQIPD (68 aa)) constitute an SH3 1 domain. 2 Fibronectin type-III domains span residues 995–1083 (APMQ…TLLA) and 1088–1184 (PPLD…IPED). 2 disordered regions span residues 1251 to 1273 (PRRQ…GAGS) and 1292 to 1330 (QKSP…FIHL). Residues 1293 to 1305 (KSPQNHRPPSVSD) show a composition bias toward polar residues. SH3 domains lie at 1452–1520 (TPAR…EMEV) and 1569–1636 (WTPK…HMSL).

It belongs to the RIMBP family. As to quaternary structure, interacts with LRGUK (via guanylate kinase-like domain). Interacts (via C-terminus) with HOOK1 (via coiled-coil region).

Its subcellular location is the cytoplasm. The protein resides in the cytoskeleton. In terms of biological role, probable component of the manchette, a microtubule-based structure which plays a key role in sperm head morphogenesis during late stages of sperm development. The polypeptide is RIMS-binding protein 3A (RIMBP3) (Homo sapiens (Human)).